The chain runs to 300 residues: Protoheme IX farnesyltransferase (300 aa).

A run of 8 helical transmembrane segments spans residues 24 to 44 (VTQL…PGMV), 46 to 66 (WHVL…AFAI), 94 to 114 (PQIL…LYTF), 118 to 138 (LTMW…TLLL), 146 to 166 (IVIG…AVTG), 172 to 192 (AWIL…VLAL), 224 to 244 (VILF…VVYL), and 278 to 298 (IVYL…RPLL).

Belongs to the UbiA prenyltransferase family. Protoheme IX farnesyltransferase subfamily.

The protein resides in the cell inner membrane. The enzyme catalyses heme b + (2E,6E)-farnesyl diphosphate + H2O = Fe(II)-heme o + diphosphate. Its pathway is porphyrin-containing compound metabolism; heme O biosynthesis; heme O from protoheme: step 1/1. Its function is as follows. Converts heme B (protoheme IX) to heme O by substitution of the vinyl group on carbon 2 of heme B porphyrin ring with a hydroxyethyl farnesyl side group. The chain is Protoheme IX farnesyltransferase from Burkholderia ambifaria (strain ATCC BAA-244 / DSM 16087 / CCUG 44356 / LMG 19182 / AMMD) (Burkholderia cepacia (strain AMMD)).